We begin with the raw amino-acid sequence, 152 residues long: Nucleoside diphosphate kinase B (152 aa).

The segment at 1 to 66 (MAHQERTFIA…DRPFYPGLVK (66 aa)) is interaction with AKAP13. ATP is bound by residues Lys12, Phe60, Arg88, Thr94, Arg105, and Asn115. The active-site Pros-phosphohistidine intermediate is His118.

The protein belongs to the NDK family. As to quaternary structure, hexamer of two different chains: An and B (A6, A5B, A4B2, A3B3, A2B4, AB5, B6). Interacts with CAPN8. Interacts with AKAP13. Interacts with ITGB1BP1 (via C-terminal domain region). Interacts with BCL2L10. Requires Mg(2+) as cofactor. Ubiquitous.

It localises to the cytoplasm. It is found in the cell projection. The protein localises to the lamellipodium. Its subcellular location is the ruffle. The protein resides in the nucleus. It catalyses the reaction a 2'-deoxyribonucleoside 5'-diphosphate + ATP = a 2'-deoxyribonucleoside 5'-triphosphate + ADP. The enzyme catalyses a ribonucleoside 5'-diphosphate + ATP = a ribonucleoside 5'-triphosphate + ADP. The catalysed reaction is ATP + protein L-histidine = ADP + protein N-phospho-L-histidine.. In terms of biological role, major role in the synthesis of nucleoside triphosphates other than ATP. The ATP gamma phosphate is transferred to the NDP beta phosphate via a ping-pong mechanism, using a phosphorylated active-site intermediate. Negatively regulates Rho activity by interacting with AKAP13/LBC. Acts as a transcriptional activator of the MYC gene; binds DNA non-specifically. Binds to both single-stranded guanine- and cytosine-rich strands within the nuclease hypersensitive element (NHE) III(1) region of the MYC gene promoter. Does not bind to duplex NHE III(1). Has G-quadruplex (G4) DNA-binding activity, which is independent of its nucleotide-binding and kinase activity. Binds both folded and unfolded G4 with similar low nanomolar affinities. Stabilizes folded G4s regardless of whether they are prefolded or not. Exhibits histidine protein kinase activity. This is Nucleoside diphosphate kinase B (NME2) from Canis lupus familiaris (Dog).